The primary structure comprises 376 residues: Chaperone protein DnaJ (376 aa).

Positions 5 to 70 (DYYEVLGVAR…QKRAAYDQFG (66 aa)) constitute a J domain. A CR-type zinc finger spans residues 134 to 212 (GTSVKIKVPT…CHGHGRVEET (79 aa)). Zn(2+) contacts are provided by Cys-147, Cys-150, Cys-164, Cys-167, Cys-186, Cys-189, Cys-200, and Cys-203. 4 CXXCXGXG motif repeats span residues 147-154 (CTNCGGSG), 164-171 (CNTCGGHG), 186-193 (CPTCRGQG), and 200-207 (CNKCHGHG).

Belongs to the DnaJ family. As to quaternary structure, homodimer. The cofactor is Zn(2+).

It localises to the cytoplasm. Participates actively in the response to hyperosmotic and heat shock by preventing the aggregation of stress-denatured proteins and by disaggregating proteins, also in an autonomous, DnaK-independent fashion. Unfolded proteins bind initially to DnaJ; upon interaction with the DnaJ-bound protein, DnaK hydrolyzes its bound ATP, resulting in the formation of a stable complex. GrpE releases ADP from DnaK; ATP binding to DnaK triggers the release of the substrate protein, thus completing the reaction cycle. Several rounds of ATP-dependent interactions between DnaJ, DnaK and GrpE are required for fully efficient folding. Also involved, together with DnaK and GrpE, in the DNA replication of plasmids through activation of initiation proteins. In Teredinibacter turnerae (strain ATCC 39867 / T7901), this protein is Chaperone protein DnaJ.